Reading from the N-terminus, the 78-residue chain is Conotoxin Cl14.9 (78 aa).

Residues 1–22 (MTAKATLLVLALVVMATSGVSS) form the signal peptide. Positions 23–47 (ASVAGGPVVNSDTVSRSDPERLSTR) are excised as a propeptide. Isoleucine 70 is subject to Isoleucine amide. Positions 74–78 (DITQQ) are excised as a propeptide.

In terms of processing, contains 2 disulfide bonds. As to expression, expressed by the venom duct.

It localises to the secreted. The sequence is that of Conotoxin Cl14.9 from Californiconus californicus (California cone).